Consider the following 710-residue polypeptide: Solute carrier organic anion transporter family member 3A1 (710 aa).

Position 1 is an N-acetylmethionine (Met-1). The tract at residues 1 to 25 is disordered; sequence MQAKKPGGSSGGGRSGELQGDEAQR. Topologically, residues 1–40 are cytoplasmic; the sequence is MQAKKPGGSSGGGRSGELQGDEAQRNKKKKKKVSCFSNIK. Residues 41–60 traverse the membrane as a helical segment; sequence IFLVSECALMLAQGTVGAYL. Residues 61 to 79 lie on the Extracellular side of the membrane; the sequence is VSVLTTLERRFNLQSADVG. Residues 80–100 traverse the membrane as a helical segment; it reads VIASSFEIGNLALILFVSYFG. The Cytoplasmic segment spans residues 101 to 106; sequence ARGHRP. Residues 107-131 form a helical membrane-spanning segment; it reads RLIGCGGIVMALGALLSALPEFLTH. The Extracellular portion of the chain corresponds to 132-174; it reads QYKYEAGEIRWGAEGRDVCAANGSGGDQGPDPDLICRSRTATN. Residue Asn-153 is glycosylated (N-linked (GlcNAc...) asparagine). Residues 175 to 203 form a helical membrane-spanning segment; it reads MMYLLLIGAQVLLGIGATPVQPLGVSYID. At 204–222 the chain is on the cytoplasmic side; it reads DHVRRKDSSLYIGILFTML. A helical membrane pass occupies residues 223–243; that stretch reads VFGPACGFILGSFCTKIYVDA. Over 244 to 261 the chain is Extracellular; it reads VFIDTSNLDITPDDPRWI. A helical transmembrane segment spans residues 262-286; sequence GAWWGGFLLCGALLFFSSVLMFGFP. Over 287 to 344 the chain is Cytoplasmic; the sequence is QSLPPHSDPALESEQAMLPEREYERPKPSNGVLRHPLEPDSSASCFQQLRVIPKVTKH. The helical transmembrane segment at 345-366 threads the bilayer; it reads LLSNPVFTCIILAACMEIAVVA. The Extracellular portion of the chain corresponds to 367 to 386; that stretch reads GFAAFLGKYLEQQFNLTTSS. The N-linked (GlcNAc...) asparagine glycan is linked to Asn-381. Residues 387-410 traverse the membrane as a helical segment; it reads ANQLLGMTAIPCACLGIFLGGLLV. Residues 411 to 414 lie on the Cytoplasmic side of the membrane; sequence KKLS. Residues 415–438 traverse the membrane as a helical segment; it reads LSALGAIRMAMLVNLVSTACYVSF. Topologically, residues 439–539 are extracellular; sequence LFLGCDTGPV…PGCQEAFLTF (101 aa). Asn-457 carries N-linked (GlcNAc...) asparagine glycosylation. The region spanning 465–513 is the Kazal-like domain; it reads LDPYSSCNKNCECQTDSFTPVCGADGITYLSACFAGCNSTNLTGCACLM. Intrachain disulfides connect Cys-471–Cys-501, Cys-477–Cys-497, and Cys-486–Cys-511. Residues Asn-502, Asn-505, and Asn-519 are each glycosylated (N-linked (GlcNAc...) asparagine). Residues 540 to 562 form a helical membrane-spanning segment; sequence LCVMCVCSMIGAMAQTPSVIILI. At 563-571 the chain is on the cytoplasmic side; the sequence is RTVSPELKS. The helical transmembrane segment at 572–597 threads the bilayer; sequence YALGVLFLLLRLLGFIPPPLIFGAGI. Residues 598-630 are Extracellular-facing; that stretch reads DSTCLFWSTFCGEQGACALYDNVAYRYLYVSIA. A helical transmembrane segment spans residues 631–648; that stretch reads IALKSFAFLLYTTTWQCL. At 649-705 the chain is on the cytoplasmic side; it reads RKNYKRYIKNHEGGLSTSEFFASTLTLDNLGRDPVPANQTHRTKFIYNLEDHEWCEN.

This sequence belongs to the organo anion transporter (TC 2.A.60) family.

It localises to the basolateral cell membrane. The protein localises to the apical cell membrane. It is found in the basal cell membrane. It carries out the reaction L-thyroxine(out) = L-thyroxine(in). The enzyme catalyses prostaglandin E1(out) = prostaglandin E1(in). The catalysed reaction is prostaglandin E2(out) = prostaglandin E2(in). It catalyses the reaction prostaglandin F2alpha(out) = prostaglandin F2alpha(in). It carries out the reaction (5Z,8Z,11Z,14Z)-eicosatetraenoate(out) = (5Z,8Z,11Z,14Z)-eicosatetraenoate(in). The enzyme catalyses taurocholate(out) = taurocholate(in). The catalysed reaction is glycocholate(out) = glycocholate(in). It catalyses the reaction estrone 3-sulfate(out) = estrone 3-sulfate(in). It carries out the reaction argipressin(out) = argipressin(in). In terms of biological role, putative organic anion antiporter with apparent broad substrate specificity. Recognizes various substrates including thyroid hormone L-thyroxine, prostanoids such as prostaglandin E1 and E2, bile acids such as taurocholate, glycolate and glycochenodeoxycholate and peptide hormones such as L-arginine vasopressin, likely operating in a tissue-specific manner. The transport mechanism, its electrogenicity and potential tissue-specific counterions remain to be elucidated. The protein is Solute carrier organic anion transporter family member 3A1 (SLCO3A1) of Bos taurus (Bovine).